We begin with the raw amino-acid sequence, 274 residues long: Cytochrome b-c1 complex subunit Rieske, mitochondrial (274 aa).

Over 79–103 (SHTDVKVPDFSEYRRPEVLDSTKSS) the chain is Mitochondrial matrix. Residues 104–140 (RESSEARKGFSYLVTAVTTVGVAYAAKNAVTQFVSSM) form a helical membrane-spanning segment. The Mitochondrial intermembrane segment spans residues 141–274 (SASADVLALA…FTSDDMVIVG (134 aa)). In terms of domain architecture, Rieske spans 187-272 (EAAVELSQLR…YEFTSDDMVI (86 aa)). Positions 217, 219, 236, 239, and 241 each coordinate [2Fe-2S] cluster. A disulfide bond links Cys222 and Cys238.

It belongs to the Rieske iron-sulfur protein family. In terms of assembly, component of the ubiquinol-cytochrome c oxidoreductase (cytochrome b-c1 complex, complex III, CIII), a multisubunit enzyme composed of 11 subunits. The complex is composed of 3 respiratory subunits cytochrome b, cytochrome c1 and Rieske protein UQCRFS1, 2 core protein subunits UQCRC1/QCR1 and UQCRC2/QCR2, and 6 low-molecular weight protein subunits UQCRH/QCR6, UQCRB/QCR7, UQCRQ/QCR8, UQCR10/QCR9, UQCR11/QCR10 and subunit 9, the cleavage product of Rieske protein UQCRFS1. The complex exists as an obligatory dimer and forms supercomplexes (SCs) in the inner mitochondrial membrane with NADH-ubiquinone oxidoreductase (complex I, CI) and cytochrome c oxidase (complex IV, CIV), resulting in different assemblies (supercomplex SCI(1)III(2)IV(1) and megacomplex MCI(2)III(2)IV(2)). Incorporation of the Rieske protein UQCRFS1 is the penultimate step in complex III assembly. Interacts with TTC19, which is involved in the clearance of UQCRFS1 fragments. Component of the ubiquinol-cytochrome c oxidoreductase (cytochrome b-c1 complex, complex III, CIII). Subunit 9 corresponds to the mitochondrial targeting sequence (MTS) of Rieske protein UQCRFS1. It is retained after processing and incorporated inside complex III, where it remains bound to the complex and localizes between the 2 core subunits UQCRC1/QCR1 and UQCRC2/QCR2. It depends on [2Fe-2S] cluster as a cofactor. Proteolytic processing is necessary for the correct insertion of UQCRFS1 in the complex III dimer. Several fragments are generated during UQCRFS1 insertion, most probably due to the endogenous matrix-processing peptidase (MPP) activity of the 2 core protein subunits UQCRC1/QCR1 and UQCRC2/QCR2, which are homologous to the 2 mitochondrial-processing peptidase (MPP) subunits beta-MPP and alpha-MPP respectively. The action of the protease is also necessary for the clearance of the UQCRFS1 fragments.

Its subcellular location is the mitochondrion inner membrane. The enzyme catalyses a quinol + 2 Fe(III)-[cytochrome c](out) = a quinone + 2 Fe(II)-[cytochrome c](out) + 2 H(+)(out). Component of the ubiquinol-cytochrome c oxidoreductase, a multisubunit transmembrane complex that is part of the mitochondrial electron transport chain which drives oxidative phosphorylation. The respiratory chain contains 3 multisubunit complexes succinate dehydrogenase (complex II, CII), ubiquinol-cytochrome c oxidoreductase (cytochrome b-c1 complex, complex III, CIII) and cytochrome c oxidase (complex IV, CIV), that cooperate to transfer electrons derived from NADH and succinate to molecular oxygen, creating an electrochemical gradient over the inner membrane that drives transmembrane transport and the ATP synthase. The cytochrome b-c1 complex catalyzes electron transfer from ubiquinol to cytochrome c, linking this redox reaction to translocation of protons across the mitochondrial inner membrane, with protons being carried across the membrane as hydrogens on the quinol. In the process called Q cycle, 2 protons are consumed from the matrix, 4 protons are released into the intermembrane space and 2 electrons are passed to cytochrome c. The Rieske protein is a catalytic core subunit containing a [2Fe-2S] iron-sulfur cluster. It cycles between 2 conformational states during catalysis to transfer electrons from the quinol bound in the Q(0) site in cytochrome b to cytochrome c1. Incorporation of UQCRFS1 is the penultimate step in complex III assembly. Its function is as follows. Component of the ubiquinol-cytochrome c oxidoreductase (cytochrome b-c1 complex, complex III, CIII). UQCRFS1 undergoes proteolytic processing once it is incorporated in the complex III dimer. One of the fragments, called subunit 9, corresponds to its mitochondrial targeting sequence (MTS). The proteolytic processing is necessary for the correct insertion of UQCRFS1 in the complex III dimer, but the persistence of UQCRFS1-derived fragments may prevent newly imported UQCRFS1 to be processed and assembled into complex III and is detrimental for the complex III structure and function. This chain is Cytochrome b-c1 complex subunit Rieske, mitochondrial (UQCRFS1), found in Symphalangus syndactylus (Siamang).